The chain runs to 154 residues: Endoribonuclease YbeY (154 aa).

3 residues coordinate Zn(2+): His-114, His-118, and His-124.

It belongs to the endoribonuclease YbeY family. Zn(2+) serves as cofactor.

The protein localises to the cytoplasm. Its function is as follows. Single strand-specific metallo-endoribonuclease involved in late-stage 70S ribosome quality control and in maturation of the 3' terminus of the 16S rRNA. The chain is Endoribonuclease YbeY from Histophilus somni (strain 129Pt) (Haemophilus somnus).